The chain runs to 201 residues: Holliday junction branch migration complex subunit RuvA (201 aa).

The tract at residues 1–63 (MYDYIKGTVT…EDNISLFGFQ (63 aa)) is domain I. Residues 64 to 142 (TTEERYLFKK…DVVASEIVYV (79 aa)) form a domain II region. The interval 143–153 (APENDMVAGLS) is flexible linker. The interval 153-201 (SPQLEEAVLALEALGYSTRELKKVIPKLSKEEDLTSDAYIKLALQLMTK) is domain III.

It belongs to the RuvA family. As to quaternary structure, homotetramer. Forms an RuvA(8)-RuvB(12)-Holliday junction (HJ) complex. HJ DNA is sandwiched between 2 RuvA tetramers; dsDNA enters through RuvA and exits via RuvB. An RuvB hexamer assembles on each DNA strand where it exits the tetramer. Each RuvB hexamer is contacted by two RuvA subunits (via domain III) on 2 adjacent RuvB subunits; this complex drives branch migration. In the full resolvosome a probable DNA-RuvA(4)-RuvB(12)-RuvC(2) complex forms which resolves the HJ.

The protein localises to the cytoplasm. The RuvA-RuvB-RuvC complex processes Holliday junction (HJ) DNA during genetic recombination and DNA repair, while the RuvA-RuvB complex plays an important role in the rescue of blocked DNA replication forks via replication fork reversal (RFR). RuvA specifically binds to HJ cruciform DNA, conferring on it an open structure. The RuvB hexamer acts as an ATP-dependent pump, pulling dsDNA into and through the RuvAB complex. HJ branch migration allows RuvC to scan DNA until it finds its consensus sequence, where it cleaves and resolves the cruciform DNA. The polypeptide is Holliday junction branch migration complex subunit RuvA (Listeria monocytogenes serotype 4b (strain CLIP80459)).